The sequence spans 273 residues: GATA-type zinc finger protein 1 (273 aa).

Disordered stretches follow at residues 99–143 (RDSK…ERVD) and 172–201 (SSRS…AGSE). The GATA-type zinc finger occupies 208–232 (CASCRTQRTPLWRDAEDGTPLCNAC).

It localises to the nucleus. Its function is as follows. Transcriptional regulator that plays a key role in germ cell development. Determines the oogenic fate by activating key genes for the oogenic program and meiotic prophase entry. Acts downstream of bone morphogenetic protein (BMP) by regulating expression of genes required for the oogenic programs, which are repressed by Polycomb activities in sexually uncommitted germ cells. Regulates expression of STRA8, a central downstream effector for the meiotic program. Acts independently of retinoic acid (RA). In males, not required for germ-cell sex determination, but required to allow the spermatogonia to efficiently accomplish the meiotic prophase. This chain is GATA-type zinc finger protein 1, found in Homo sapiens (Human).